The primary structure comprises 943 residues: PAX-interacting protein 1 (943 aa).

2 consecutive BRCT domains span residues 8–93 and 94–182; these read VPEE…GFSP and ESGQ…LYHP. 3 disordered regions span residues 190 to 281, 400 to 507, and 620 to 641; these read PEEE…RRLQ, AQQQ…QQMR, and QQHLQNQQPLQHQNQQVNPHQT. Positions 198 to 214 are enriched in basic and acidic residues; the sequence is ENERSSRSEGSYSDRRS. Low complexity predominate over residues 220-230; it reads SSPTSSRDASP. Low complexity predominate over residues 620–635; it reads QQHLQNQQPLQHQNQQ. 2 BRCT domains span residues 664–756 and 763–851; these read PEEG…RTLH and PGAK…IQHS. A Nuclear localization signal motif is present at residues 730–747; the sequence is GKRCVTAHWLNTVLKKKK.

Interacts with smad2 via its last three BRCT domain-containing regions in an activin signal-dependent manner.

It is found in the nucleus. Involved in DNA damage response. May function as transcriptional cofactor in TGF beta signaling. Accentuates Smad2-dependent transcription. This chain is PAX-interacting protein 1 (paxip1), found in Danio rerio (Zebrafish).